The chain runs to 495 residues: Amorpha-4,11-diene 12-monooxygenase (495 aa).

Residues Met-1 to Lys-6 are Cytoplasmic-facing. A helical; Signal-anchor for type II membrane protein transmembrane segment spans residues Ala-7–Ala-29. Topologically, residues Thr-30–Phe-495 are lumenal. 5 N-linked (GlcNAc...) asparagine glycosylation sites follow: Asn-176, Asn-261, Asn-267, Asn-386, and Asn-417. Residue Cys-439 coordinates heme.

The protein belongs to the cytochrome P450 family. The cofactor is heme. In terms of tissue distribution, highly expressed both in apical and sub-apical cells of glandular secretory trichomes. Detected in flower buds, leaves and roots. Also present in non-glandular trichome cells.

It localises to the endoplasmic reticulum membrane. It catalyses the reaction (+)-amorpha-4,11-diene + 3 reduced [NADPH--hemoprotein reductase] + 3 O2 = (+)-artemisinate + 3 oxidized [NADPH--hemoprotein reductase] + 4 H2O + 4 H(+). The protein operates within sesquiterpene biosynthesis. Functionally, involved in the biosynthesis of the antimalarial endoperoxide artemisinin. Catalyzes three consecutive oxidations of amorpha-4,11-diene to produce artemisinic acid, with artemisinic alcohol and artemisinic aldehyde as intermediates products, but is unable to oxidize germacrene A. No activity with limonene, alpha-pinene, beta-pinene, pinocarveol, (-)-alloisolongifolene, caryophyllene, (-)-alpha-gurjunene, (+)-gamma-gurjunene, (+)-ledene, (+)-beta-selinene and (+)-valencene as substrates. The polypeptide is Amorpha-4,11-diene 12-monooxygenase (Artemisia annua (Sweet wormwood)).